The primary structure comprises 70 residues: Exodeoxyribonuclease 7 small subunit (70 aa).

Belongs to the XseB family. Heterooligomer composed of large and small subunits.

Its subcellular location is the cytoplasm. The catalysed reaction is Exonucleolytic cleavage in either 5'- to 3'- or 3'- to 5'-direction to yield nucleoside 5'-phosphates.. Bidirectionally degrades single-stranded DNA into large acid-insoluble oligonucleotides, which are then degraded further into small acid-soluble oligonucleotides. The polypeptide is Exodeoxyribonuclease 7 small subunit (Magnetococcus marinus (strain ATCC BAA-1437 / JCM 17883 / MC-1)).